Here is a 230-residue protein sequence, read N- to C-terminus: Ribose-5-phosphate isomerase A (230 aa).

Substrate contacts are provided by residues 29-32 (SGST), 86-89 (DGAD), and 99-102 (KGGG). Residue Glu-108 is the Proton acceptor of the active site. Position 126 (Lys-126) interacts with substrate.

The protein belongs to the ribose 5-phosphate isomerase family. Homodimer.

The enzyme catalyses aldehydo-D-ribose 5-phosphate = D-ribulose 5-phosphate. It participates in carbohydrate degradation; pentose phosphate pathway; D-ribose 5-phosphate from D-ribulose 5-phosphate (non-oxidative stage): step 1/1. Functionally, catalyzes the reversible conversion of ribose-5-phosphate to ribulose 5-phosphate. The chain is Ribose-5-phosphate isomerase A from Desulfatibacillum aliphaticivorans.